The primary structure comprises 198 residues: Probable GTP-binding protein EngB (198 aa).

One can recognise an EngB-type G domain in the interval 22 to 195; sequence NRNEVAFVGR…IDKLFLEFAT (174 aa). Residues 30–37, 57–61, 75–78, 142–145, and 174–176 contribute to the GTP site; these read GRSNVGKS, GKTRL, DLPG, TKSD, and YSS. Residues Ser37 and Thr59 each coordinate Mg(2+).

The protein belongs to the TRAFAC class TrmE-Era-EngA-EngB-Septin-like GTPase superfamily. EngB GTPase family. Mg(2+) is required as a cofactor.

In terms of biological role, necessary for normal cell division and for the maintenance of normal septation. The protein is Probable GTP-binding protein EngB of Clostridium botulinum (strain Alaska E43 / Type E3).